A 447-amino-acid polypeptide reads, in one-letter code: Omega-3 fatty acid desaturase, chloroplastic (447 aa).

The Histidine box-1 motif lies at 167–171 (HDCGH). Residues 203 to 207 (HRTHH) carry the Histidine box-2 motif. A Histidine box-3 motif is present at residues 370–374 (HVIHH).

This sequence belongs to the fatty acid desaturase type 1 family.

It localises to the plastid. It is found in the chloroplast membrane. It functions in the pathway lipid metabolism; polyunsaturated fatty acid biosynthesis. Its function is as follows. Chloroplast omega-3 fatty acid desaturase introduces the third double bond in the biosynthesis of 16:3 and 18:3 fatty acids, important constituents of plant membranes. It is thought to use ferredoxin as an electron donor and to act on fatty acids esterified to galactolipids, sulfolipids and phosphatidylglycerol. The polypeptide is Omega-3 fatty acid desaturase, chloroplastic (FAD7) (Sesamum indicum (Oriental sesame)).